The following is a 471-amino-acid chain: Cysteine--tRNA ligase (471 aa).

A Zn(2+)-binding site is contributed by C29. The short motif at 31–41 (PTVYNYIHIGN) is the 'HIGH' region element. 3 residues coordinate Zn(2+): C209, H234, and E238. The short motif at 266–270 (KMSKS) is the 'KMSKS' region element. Residue K269 coordinates ATP.

It belongs to the class-I aminoacyl-tRNA synthetase family. Monomer. The cofactor is Zn(2+).

It localises to the cytoplasm. It carries out the reaction tRNA(Cys) + L-cysteine + ATP = L-cysteinyl-tRNA(Cys) + AMP + diphosphate. This chain is Cysteine--tRNA ligase, found in Listeria innocua serovar 6a (strain ATCC BAA-680 / CLIP 11262).